The chain runs to 316 residues: Apolipoprotein E (316 aa).

Positions 1 to 18 are cleaved as a signal peptide; the sequence is MKALWAVLVVTLLAGCLA. 8 consecutive repeat copies span residues 76-97, 98-119, 120-141, 142-163, 164-185, 186-207, 208-229, and 230-251. An 8 X 22 AA approximate tandem repeats region spans residues 76-251; sequence VLMEDTMTEL…RLEEMREQME (176 aa). Met139 is subject to Methionine sulfoxide. Phosphoserine is present on Ser143. An LDL and other lipoprotein receptors binding region spans residues 154–164; that stretch reads HLRKLRKRLMR. A heparin-binding site is contributed by 158–161; that stretch reads LRKR. A lipid-binding and lipoprotein association region spans residues 206-286; sequence TANLGAGAGK…GWFEPLVEDM (81 aa). Heparin is bound at residue 225–232; sequence GARIRGRL. The segment at 262–316 is homooligomerization; the sequence is QQMRLQAEIFQARLKGWFEPLVEDMQRQWANLVEKIQASVAANPIPPSSVPQESP. The tract at residues 274–286 is specificity for association with VLDL; sequence RLKGWFEPLVEDM.

The protein belongs to the apolipoprotein A1/A4/E family. Homotetramer. May interact with ABCA1; functionally associated with ABCA1 in the biogenesis of HDLs. May interact with APP/A4 amyloid-beta peptide; the interaction is extremely stable in vitro but its physiological significance is unclear. May interact with MAPT. May interact with MAP2. In the cerebrospinal fluid, interacts with secreted SORL1. Interacts with PMEL; this allows the loading of PMEL luminal fragment on ILVs to induce fibril nucleation. APOE exists as multiple glycosylated and sialylated glycoforms within cells and in plasma. The extent of glycosylation and sialylation are tissue and context specific. In terms of processing, glycated in plasma VLDL. Post-translationally, phosphorylated by FAM20C in the extracellular medium.

The protein localises to the secreted. It is found in the extracellular space. The protein resides in the extracellular matrix. Its subcellular location is the extracellular vesicle. It localises to the endosome. The protein localises to the multivesicular body. Its function is as follows. APOE is an apolipoprotein, a protein associating with lipid particles, that mainly functions in lipoprotein-mediated lipid transport between organs via the plasma and interstitial fluids. APOE is a core component of plasma lipoproteins and is involved in their production, conversion and clearance. Apolipoproteins are amphipathic molecules that interact both with lipids of the lipoprotein particle core and the aqueous environment of the plasma. As such, APOE associates with chylomicrons, chylomicron remnants, very low density lipoproteins (VLDL) and intermediate density lipoproteins (IDL) but shows a preferential binding to high-density lipoproteins (HDL). It also binds a wide range of cellular receptors including the LDL receptor/LDLR, the LDL receptor-related proteins LRP1, LRP2 and LRP8 and the very low-density lipoprotein receptor/VLDLR that mediate the cellular uptake of the APOE-containing lipoprotein particles. Finally, APOE also has a heparin-binding activity and binds heparan-sulfate proteoglycans on the surface of cells, a property that supports the capture and the receptor-mediated uptake of APOE-containing lipoproteins by cells. A main function of APOE is to mediate lipoprotein clearance through the uptake of chylomicrons, VLDLs, and HDLs by hepatocytes. APOE is also involved in the biosynthesis by the liver of VLDLs as well as their uptake by peripheral tissues ensuring the delivery of triglycerides and energy storage in muscle, heart and adipose tissues. By participating in the lipoprotein-mediated distribution of lipids among tissues, APOE plays a critical role in plasma and tissues lipid homeostasis. APOE is also involved in two steps of reverse cholesterol transport, the HDLs-mediated transport of cholesterol from peripheral tissues to the liver, and thereby plays an important role in cholesterol homeostasis. First, it is functionally associated with ABCA1 in the biogenesis of HDLs in tissues. Second, it is enriched in circulating HDLs and mediates their uptake by hepatocytes. APOE also plays an important role in lipid transport in the central nervous system, regulating neuron survival and sprouting. The polypeptide is Apolipoprotein E (Apoe) (Peromyscus leucopus (White-footed mouse)).